An 85-amino-acid polypeptide reads, in one-letter code: U4-theraphotoxin-Hhn1ad (85 aa).

The signal sequence occupies residues 1-22 (MKVTLIAILTCAAVLVLHTTAA). Positions 23-48 (EELKTESQLMEVGMPDTELATVDEER) are excised as a propeptide. 3 disulfide bridges follow: cysteine 52-cysteine 66, cysteine 56-cysteine 77, and cysteine 71-cysteine 82.

The protein belongs to the neurotoxin 12 (Hwtx-2) family. 02 (Hwtx-2) subfamily. As to expression, expressed by the venom gland.

It is found in the secreted. Postsynaptic neurotoxin. The sequence is that of U4-theraphotoxin-Hhn1ad from Cyriopagopus hainanus (Chinese bird spider).